A 77-amino-acid polypeptide reads, in one-letter code: Exodeoxyribonuclease 7 small subunit (77 aa).

Belongs to the XseB family. As to quaternary structure, heterooligomer composed of large and small subunits.

The protein resides in the cytoplasm. The enzyme catalyses Exonucleolytic cleavage in either 5'- to 3'- or 3'- to 5'-direction to yield nucleoside 5'-phosphates.. Functionally, bidirectionally degrades single-stranded DNA into large acid-insoluble oligonucleotides, which are then degraded further into small acid-soluble oligonucleotides. The sequence is that of Exodeoxyribonuclease 7 small subunit from Clostridium acetobutylicum (strain ATCC 824 / DSM 792 / JCM 1419 / IAM 19013 / LMG 5710 / NBRC 13948 / NRRL B-527 / VKM B-1787 / 2291 / W).